Reading from the N-terminus, the 336-residue chain is G-protein coupled receptor homolog FPV027 (336 aa).

The Extracellular segment spans residues 1–31 (MSMNNITSKMNQDSYGYFQLHMSDFTRVSLS). Asn-5 carries an N-linked (GlcNAc...) asparagine; by host glycan. The chain crosses the membrane as a helical span at residues 32–52 (IVFTLVFLVGIIGNAVIIWFI). The Cytoplasmic portion of the chain corresponds to 53–63 (GFKWTKTISTL). A helical transmembrane segment spans residues 64 to 84 (LFINLALADSLFLIFIPVYTV). The Extracellular portion of the chain corresponds to 85–101 (YVLSNFHWYLGEFLCRV). A disulfide bridge connects residues Cys-99 and Cys-178. Residues 102–122 (SSFFFTTNMYASMFLLTFISI) form a helical membrane-spanning segment. The Cytoplasmic segment spans residues 123 to 143 (DKYLTLTSHRLVYKYRKYRNY). Residues 144-164 (YVCIGAIWCISIALGVPTLYY) form a helical membrane-spanning segment. Residues 165–200 (KRVILSSSRNETRCISYYGDDKHTAITIYRIIVCIR) are Extracellular-facing. Residue Asn-174 is glycosylated (N-linked (GlcNAc...) asparagine; by host). Residues 201–221 (FIIGYVFPMTVILLSYALIVY) traverse the membrane as a helical segment. The Cytoplasmic portion of the chain corresponds to 222–240 (KVKFINKPPNRSFMITTAS). Residues 241–261 (IFVFLACWTPHHVLNIISLYG) traverse the membrane as a helical segment. Residues 262–276 (LKSTSMYNYIKESIP) are Extracellular-facing. A helical transmembrane segment spans residues 277–297 (FVNAIAFVYSAINPIIYIFVI). The Cytoplasmic portion of the chain corresponds to 298–336 (RLTSTYDSDTMDELRSALLDEETTSTEDCSDIEISDISR).

The protein belongs to the G-protein coupled receptor 1 family.

The protein localises to the host cell membrane. The chain is G-protein coupled receptor homolog FPV027 from Vertebrata (FPV).